We begin with the raw amino-acid sequence, 260 residues long: Methyl-coenzyme M reductase subunit gamma (260 aa).

Arginine 123 contributes to the coenzyme M binding site.

This sequence belongs to the methyl-coenzyme M reductase gamma subunit family. As to quaternary structure, MCR is a hexamer of two alpha, two beta, and two gamma chains, forming a dimer of heterotrimers. Coenzyme F430 serves as cofactor.

It localises to the cytoplasm. The catalysed reaction is coenzyme B + methyl-coenzyme M = methane + coenzyme M-coenzyme B heterodisulfide. It participates in one-carbon metabolism; methyl-coenzyme M reduction; methane from methyl-coenzyme M: step 1/1. Functionally, component of the methyl-coenzyme M reductase (MCR) I that catalyzes the reductive cleavage of methyl-coenzyme M (CoM-S-CH3 or 2-(methylthio)ethanesulfonate) using coenzyme B (CoB or 7-mercaptoheptanoylthreonine phosphate) as reductant which results in the production of methane and the mixed heterodisulfide of CoB and CoM (CoM-S-S-CoB). This is the final step in methanogenesis. The chain is Methyl-coenzyme M reductase subunit gamma (mcrG) from Methanococcus vannielii.